Here is a 102-residue protein sequence, read N- to C-terminus: NADH-quinone oxidoreductase subunit K (102 aa).

3 helical membrane-spanning segments follow: residues 5–25 (IAHY…GIFL), 31–51 (IVIL…FVAF), and 66–86 (FVLT…VVFF).

Belongs to the complex I subunit 4L family. As to quaternary structure, NDH-1 is composed of 14 different subunits. Subunits NuoA, H, J, K, L, M, N constitute the membrane sector of the complex.

It localises to the cell inner membrane. It catalyses the reaction a quinone + NADH + 5 H(+)(in) = a quinol + NAD(+) + 4 H(+)(out). NDH-1 shuttles electrons from NADH, via FMN and iron-sulfur (Fe-S) centers, to quinones in the respiratory chain. The immediate electron acceptor for the enzyme in this species is believed to be ubiquinone. Couples the redox reaction to proton translocation (for every two electrons transferred, four hydrogen ions are translocated across the cytoplasmic membrane), and thus conserves the redox energy in a proton gradient. This Brucella abortus (strain S19) protein is NADH-quinone oxidoreductase subunit K.